The chain runs to 75 residues: Sec-independent protein translocase protein TatA (75 aa).

A helical transmembrane segment spans residues 1–21 (MGSFSIWHWLIVLVIIALVFG). Residues 45-75 (DASADKPADQVTQQRVSDDTIDVQAKEKSNS) form a disordered region.

This sequence belongs to the TatA/E family. In terms of assembly, the Tat system comprises two distinct complexes: a TatABC complex, containing multiple copies of TatA, TatB and TatC subunits, and a separate TatA complex, containing only TatA subunits. Substrates initially bind to the TatABC complex, which probably triggers association of the separate TatA complex to form the active translocon.

Its subcellular location is the cell inner membrane. Part of the twin-arginine translocation (Tat) system that transports large folded proteins containing a characteristic twin-arginine motif in their signal peptide across membranes. TatA could form the protein-conducting channel of the Tat system. This chain is Sec-independent protein translocase protein TatA, found in Bordetella bronchiseptica (strain ATCC BAA-588 / NCTC 13252 / RB50) (Alcaligenes bronchisepticus).